The following is a 146-amino-acid chain: Hemoglobin subunit beta (146 aa).

At V1 the chain carries N-acetylvaline. Residues 2 to 146 (HLTGEEKSLV…VANALAHKYH (145 aa)) form the Globin domain. T12 is modified (phosphothreonine). The residue at position 44 (S44) is a Phosphoserine. Position 59 is an N6-acetyllysine (K59). Residue H63 coordinates heme b. K82 is modified (N6-acetyllysine). H92 contacts heme b. The residue at position 93 (C93) is an S-nitrosocysteine. Residue K144 is modified to N6-acetyllysine.

The protein belongs to the globin family. Heterotetramer of two alpha chains and two beta chains. Red blood cells.

Involved in oxygen transport from the lung to the various peripheral tissues. This is Hemoglobin subunit beta (HBB) from Ursus maritimus (Polar bear).